Consider the following 160-residue polypeptide: Bursicon (160 aa).

The N-terminal stretch at 1–20 (MSVLNTFLVIVALILCYVND) is a signal peptide. In terms of domain architecture, CTCK spans 38 to 131 (CQECQMTAVI…PLQCMCRPCG (94 aa)). 5 disulfides stabilise this stretch: C41–C90, C55–C104, C65–C125, C69–C127, and C87–C130.

As to quaternary structure, heterodimer of burs and pburs.

It localises to the secreted. Functionally, final heterodimeric neurohormone released at the end of the molting cycle, involved in the sclerotization (tanning) of the insect cuticle, melanization and wing spreading. In Bombyx mori (Silk moth), this protein is Bursicon.